The chain runs to 193 residues: MEVDLLHFEKKYHNYIVAGIDEAGRGPLAGPVVASAVIIDNTNIIPGIKDSKKLSKKKRELLYEQITSNYVWAAAIISHIEIDEINILEATKKACSIAAANLSLKPEIVLVDGNMPFKDKRFVSMINGDNLSLSIAAASIVAKVTRDRLMLDLSTEFPQYLWHKNSGYGTKEHIEAINMHGLSPYHRRSFKCC.

The 179-residue stretch at 15–193 (YIVAGIDEAG…PYHRRSFKCC (179 aa)) folds into the RNase H type-2 domain. The a divalent metal cation site is built by aspartate 21, glutamate 22, and aspartate 112.

This sequence belongs to the RNase HII family. The cofactor is Mn(2+). Mg(2+) serves as cofactor.

It is found in the cytoplasm. It carries out the reaction Endonucleolytic cleavage to 5'-phosphomonoester.. Endonuclease that specifically degrades the RNA of RNA-DNA hybrids. The sequence is that of Ribonuclease HII from Rickettsia felis (strain ATCC VR-1525 / URRWXCal2) (Rickettsia azadi).